Reading from the N-terminus, the 425-residue chain is Serine--tRNA ligase (425 aa).

227–229 (TAE) contributes to the L-serine binding site. Residues 258–260 (RRE) and Val274 contribute to the ATP site. Glu281 is an L-serine binding site. Residue 347-350 (ETHS) participates in ATP binding. Position 382 (Thr382) interacts with L-serine.

Belongs to the class-II aminoacyl-tRNA synthetase family. Type-1 seryl-tRNA synthetase subfamily. In terms of assembly, homodimer. The tRNA molecule binds across the dimer.

It is found in the cytoplasm. It catalyses the reaction tRNA(Ser) + L-serine + ATP = L-seryl-tRNA(Ser) + AMP + diphosphate + H(+). The catalysed reaction is tRNA(Sec) + L-serine + ATP = L-seryl-tRNA(Sec) + AMP + diphosphate + H(+). It participates in aminoacyl-tRNA biosynthesis; selenocysteinyl-tRNA(Sec) biosynthesis; L-seryl-tRNA(Sec) from L-serine and tRNA(Sec): step 1/1. Its function is as follows. Catalyzes the attachment of serine to tRNA(Ser). Is also able to aminoacylate tRNA(Sec) with serine, to form the misacylated tRNA L-seryl-tRNA(Sec), which will be further converted into selenocysteinyl-tRNA(Sec). The sequence is that of Serine--tRNA ligase from Deinococcus radiodurans (strain ATCC 13939 / DSM 20539 / JCM 16871 / CCUG 27074 / LMG 4051 / NBRC 15346 / NCIMB 9279 / VKM B-1422 / R1).